We begin with the raw amino-acid sequence, 54 residues long: FATVDCSDYPKPVCPLDYMPLCGSDSKTYSNKCNFCNAVVESSGTLTLRHFGKC.

Residues 4 to 54 (VDCSDYPKPVCPLDYMPLCGSDSKTYSNKCNFCNAVVESSGTLTLRHFGKC) form the Kazal-like domain. Disulfide bonds link Cys6–Cys36, Cys14–Cys33, and Cys22–Cys54.

This is the only ovomucoid third domain known to be not glycosylated.

The protein resides in the secreted. This chain is Ovomucoid, found in Struthio camelus (Common ostrich).